We begin with the raw amino-acid sequence, 252 residues long: Geranylgeranylglyceryl phosphate synthase (252 aa).

Residues Asp-26 and Ser-55 each coordinate Mg(2+). Sn-glycerol 1-phosphate contacts are provided by residues 174-180 (YLEAGSG), 205-206 (GG), and 227-228 (GT).

This sequence belongs to the GGGP/HepGP synthase family. Group II subfamily. Homotetramer. Homohexamer. Mg(2+) serves as cofactor.

It localises to the cytoplasm. It carries out the reaction sn-glycerol 1-phosphate + (2E,6E,10E)-geranylgeranyl diphosphate = sn-3-O-(geranylgeranyl)glycerol 1-phosphate + diphosphate. It functions in the pathway membrane lipid metabolism; glycerophospholipid metabolism. Prenyltransferase that catalyzes the transfer of the geranylgeranyl moiety of geranylgeranyl diphosphate (GGPP) to the C3 hydroxyl of sn-glycerol-1-phosphate (G1P). This reaction is the first ether-bond-formation step in the biosynthesis of archaeal membrane lipids. The sequence is that of Geranylgeranylglyceryl phosphate synthase from Thermococcus kodakarensis (strain ATCC BAA-918 / JCM 12380 / KOD1) (Pyrococcus kodakaraensis (strain KOD1)).